The following is a 364-amino-acid chain: 3-isopropylmalate dehydrogenase (364 aa).

79-92 serves as a coordination point for NAD(+); it reads GPKWEHLPPDQQPE. Positions 100, 110, 139, and 228 each coordinate substrate. The Mg(2+) site is built by aspartate 228, aspartate 252, and aspartate 256. Residue 286-298 participates in NAD(+) binding; it reads GSAPDIAGKNIAN.

It belongs to the isocitrate and isopropylmalate dehydrogenases family. LeuB type 1 subfamily. In terms of assembly, homodimer. It depends on Mg(2+) as a cofactor. The cofactor is Mn(2+).

The protein localises to the cytoplasm. The catalysed reaction is (2R,3S)-3-isopropylmalate + NAD(+) = 4-methyl-2-oxopentanoate + CO2 + NADH. Its pathway is amino-acid biosynthesis; L-leucine biosynthesis; L-leucine from 3-methyl-2-oxobutanoate: step 3/4. Functionally, catalyzes the oxidation of 3-carboxy-2-hydroxy-4-methylpentanoate (3-isopropylmalate) to 3-carboxy-4-methyl-2-oxopentanoate. The product decarboxylates to 4-methyl-2 oxopentanoate. This is 3-isopropylmalate dehydrogenase from Escherichia coli (strain UTI89 / UPEC).